The sequence spans 208 residues: Large ribosomal subunit protein uL3 (208 aa).

A disordered region spans residues 117 to 149 (FQGVIKRHGQSRGPMAHGSRYHRRPGSMGPVSP).

It belongs to the universal ribosomal protein uL3 family. As to quaternary structure, part of the 50S ribosomal subunit. Forms a cluster with proteins L14 and L19.

Functionally, one of the primary rRNA binding proteins, it binds directly near the 3'-end of the 23S rRNA, where it nucleates assembly of the 50S subunit. This chain is Large ribosomal subunit protein uL3, found in Streptococcus equi subsp. equi (strain 4047).